A 536-amino-acid polypeptide reads, in one-letter code: Light-independent protochlorophyllide reductase subunit B (536 aa).

[4Fe-4S] cluster is bound at residue Asp36. Residue Asp292 is the Proton donor of the active site. Substrate is bound at residue 427 to 428; sequence GL. The interval 447 to 489 is disordered; that stretch reads QSHLGHLGGHQSQTEQQQSQAATNPSTQSNTDSSSEESPLWTP. A compositionally biased stretch (low complexity) spans 448–469; sequence SHLGHLGGHQSQTEQQQSQAAT. The segment covering 470 to 483 has biased composition (polar residues); the sequence is NPSTQSNTDSSSEE.

It belongs to the ChlB/BchB/BchZ family. As to quaternary structure, protochlorophyllide reductase is composed of three subunits; ChlL, ChlN and ChlB. Forms a heterotetramer of two ChlB and two ChlN subunits. Requires [4Fe-4S] cluster as cofactor.

The catalysed reaction is chlorophyllide a + oxidized 2[4Fe-4S]-[ferredoxin] + 2 ADP + 2 phosphate = protochlorophyllide a + reduced 2[4Fe-4S]-[ferredoxin] + 2 ATP + 2 H2O. Its pathway is porphyrin-containing compound metabolism; chlorophyll biosynthesis (light-independent). Component of the dark-operative protochlorophyllide reductase (DPOR) that uses Mg-ATP and reduced ferredoxin to reduce ring D of protochlorophyllide (Pchlide) to form chlorophyllide a (Chlide). This reaction is light-independent. The NB-protein (ChlN-ChlB) is the catalytic component of the complex. The chain is Light-independent protochlorophyllide reductase subunit B from Prochlorococcus marinus (strain MIT 9303).